A 340-amino-acid polypeptide reads, in one-letter code: Ketol-acid reductoisomerase (NADP(+)) (340 aa).

Positions 3–182 constitute a KARI N-terminal Rossmann domain; it reads VQMEYEKDVK…GAARVGLLET (180 aa). Residues 26–29, R49, S53, and 83–86 contribute to the NADP(+) site; these read YGSQ and DEIQ. H108 is a catalytic residue. G134 is an NADP(+) binding site. The 146-residue stretch at 183 to 328 folds into the KARI C-terminal knotted domain; sequence TYKEETEEDL…AELRKAMPFV (146 aa). Mg(2+) contacts are provided by D191, E195, E227, and E231. Position 252 (S252) interacts with substrate.

Belongs to the ketol-acid reductoisomerase family. Mg(2+) is required as a cofactor.

It carries out the reaction (2R)-2,3-dihydroxy-3-methylbutanoate + NADP(+) = (2S)-2-acetolactate + NADPH + H(+). The enzyme catalyses (2R,3R)-2,3-dihydroxy-3-methylpentanoate + NADP(+) = (S)-2-ethyl-2-hydroxy-3-oxobutanoate + NADPH + H(+). The protein operates within amino-acid biosynthesis; L-isoleucine biosynthesis; L-isoleucine from 2-oxobutanoate: step 2/4. It functions in the pathway amino-acid biosynthesis; L-valine biosynthesis; L-valine from pyruvate: step 2/4. Involved in the biosynthesis of branched-chain amino acids (BCAA). Catalyzes an alkyl-migration followed by a ketol-acid reduction of (S)-2-acetolactate (S2AL) to yield (R)-2,3-dihydroxy-isovalerate. In the isomerase reaction, S2AL is rearranged via a Mg-dependent methyl migration to produce 3-hydroxy-3-methyl-2-ketobutyrate (HMKB). In the reductase reaction, this 2-ketoacid undergoes a metal-dependent reduction by NADPH to yield (R)-2,3-dihydroxy-isovalerate. In Streptococcus pneumoniae (strain Hungary19A-6), this protein is Ketol-acid reductoisomerase (NADP(+)).